We begin with the raw amino-acid sequence, 229 residues long: Lipoprotein-releasing system ATP-binding protein LolD (229 aa).

The 223-residue stretch at 7 to 229 (LKCKNVTKTY…KNGKLYKKNL (223 aa)) folds into the ABC transporter domain. Residue 43-50 (GDSGSGKS) participates in ATP binding.

The protein belongs to the ABC transporter superfamily. Lipoprotein translocase (TC 3.A.1.125) family. The complex is composed of two ATP-binding proteins (LolD) and two transmembrane proteins (LolC and LolE).

It localises to the cell membrane. In terms of biological role, part of the ABC transporter complex LolCDE involved in the translocation of lipoproteins, in an ATP-dependent manner. The chain is Lipoprotein-releasing system ATP-binding protein LolD from Wigglesworthia glossinidia brevipalpis.